We begin with the raw amino-acid sequence, 457 residues long: Chromosomal replication initiator protein DnaA (457 aa).

The domain I, interacts with DnaA modulators stretch occupies residues 1 to 73 (MANNYQTLYD…SKYLSEEFKK (73 aa)). Residues 73 to 108 (KENIVNFEFIIDNEKLLINSNFLIKETNIKNRFNFS) form a domain II region. The interval 109-331 (DELLRYNFNN…GNLKQICFWA (223 aa)) is domain III, AAA+ region. 4 residues coordinate ATP: glycine 156, glycine 158, lysine 159, and threonine 160. The domain IV, binds dsDNA stretch occupies residues 332–457 (DNDTNKDLII…LQINLIINKF (126 aa)).

The protein belongs to the DnaA family. Oligomerizes as a right-handed, spiral filament on DNA at oriC.

The protein localises to the cytoplasm. Plays an essential role in the initiation and regulation of chromosomal replication. ATP-DnaA binds to the origin of replication (oriC) to initiate formation of the DNA replication initiation complex once per cell cycle. Binds the DnaA box (a 9 base pair repeat at the origin) and separates the double-stranded (ds)DNA. Forms a right-handed helical filament on oriC DNA; dsDNA binds to the exterior of the filament while single-stranded (ss)DNA is stabiized in the filament's interior. The ATP-DnaA-oriC complex binds and stabilizes one strand of the AT-rich DNA unwinding element (DUE), permitting loading of DNA polymerase. After initiation quickly degrades to an ADP-DnaA complex that is not apt for DNA replication. Binds acidic phospholipids. This chain is Chromosomal replication initiator protein DnaA, found in Ureaplasma parvum serovar 3 (strain ATCC 700970).